We begin with the raw amino-acid sequence, 180 residues long: Symerythrin (180 aa).

The 3-(L-phenylalan-2'-yl)-L-valine (Phe-Val) cross-link spans 17–127; sequence FQDAVSHNNT…RRALETALEV (111 aa). The Ferritin-like diiron domain maps to 21–180; the sequence is VSHNNTDANA…RALENLLEVA (160 aa). Positions 37, 40, 71, 128, 131, 162, and 165 each coordinate Fe(3+).

Monomer. The cofactor is Fe(3+).

The protein resides in the plastid. It localises to the cyanelle. Functionally, exhibits oxidase-like and peroxidase-like activities in vitro. The sequence is that of Symerythrin from Cyanophora paradoxa.